Consider the following 3391-residue polypeptide: Genome polyprotein (3391 aa).

An interaction with host EXOC1 region spans residues 1–15; that stretch reads MNDQRKEAKNTPFNM. Residues 1–101 lie on the Cytoplasmic side of the membrane; sequence MNDQRKEAKN…LNILNRRRRS (101 aa). The interval 37-72 is hydrophobic; homodimerization of capsid protein C; that stretch reads MLQGRGPLKLYMALVAFLRFLTIPPTAGILKRWGTI. A propeptide spans 101–114 (ER anchor for the Capsid protein C, removed in mature form by serine protease NS3); sequence SAGMIIMLIPTVMA. Residues 101 to 114 constitute a propeptide, ER anchor for the capsid protein C, removed in mature form by serine protease NS3; it reads SAGMIIMLIPTVMA. A helical membrane pass occupies residues 102–122; that stretch reads AGMIIMLIPTVMAFHLTTRNG. The Extracellular portion of the chain corresponds to 123 to 242; that stretch reads EPHMIVSRQE…HVQRIETWIL (120 aa). An N-linked (GlcNAc...) asparagine; by host glycan is attached at asparagine 183. The helical transmembrane segment at 243 to 260 threads the bilayer; it reads RHPGFTMMAAILAYTIGT. Residue threonine 261 is a topological domain, cytoplasmic. The helical transmembrane segment at 262–280 threads the bilayer; it reads HFQRALILILLTAVTPSMT. The Extracellular segment spans residues 281 to 727; sequence MRCIGMSNRD…QVFGAIYGAA (447 aa). Cystine bridges form between cysteine 283–cysteine 310, cysteine 340–cysteine 401, cysteine 354–cysteine 385, and cysteine 372–cysteine 396. N-linked (GlcNAc...) asparagine; by host glycosylation is present at asparagine 347. Positions 378-391 are fusion peptide; that stretch reads DRGWGNGCGLFGKG. Residue asparagine 433 is glycosylated (N-linked (GlcNAc...) asparagine; by host). 2 disulfides stabilise this stretch: cysteine 465–cysteine 565 and cysteine 582–cysteine 613. Residues 728–748 form a helical membrane-spanning segment; it reads FSGVSWTMKILIGVIITWIGM. Residues 749–752 lie on the Cytoplasmic side of the membrane; that stretch reads NSRS. Residues 753 to 773 form a helical membrane-spanning segment; that stretch reads TSLSVTLVLVGIVTLYLGVMV. Residues 774 to 1195 lie on the Extracellular side of the membrane; it reads QADSGCVVSW…MVGATMTDDI (422 aa). 6 disulfide bridges follow: cysteine 779–cysteine 790, cysteine 830–cysteine 918, cysteine 954–cysteine 998, cysteine 1055–cysteine 1104, cysteine 1066–cysteine 1088, and cysteine 1087–cysteine 1091. N-linked (GlcNAc...) asparagine; by host glycosylation is found at asparagine 905 and asparagine 982. N-linked (GlcNAc...) asparagine; by host glycosylation is present at asparagine 1134. A helical membrane pass occupies residues 1196–1220; it reads GMGVTYLALLAAFKVRPTFAAGLLL. Topologically, residues 1221 to 1226 are cytoplasmic; that stretch reads RKLTSK. Residues 1227–1245 traverse the membrane as a helical segment; the sequence is ELMMTTIGIVLSSQSTIPE. At 1246-1269 the chain is on the lumenal side; sequence TILELTDALALGMMVLKMVRNMEK. The chain crosses the membrane as a helical span at residues 1270 to 1290; sequence YQLAVTIMAILCVPNAVILQN. Alanine 1291 is a topological domain (cytoplasmic). The helical transmembrane segment at 1292–1310 threads the bilayer; sequence WKVSCTILAVVSVSPLFLT. Residues 1311–1317 are Lumenal-facing; it reads SSQQKTD. A helical membrane pass occupies residues 1318-1338; the sequence is WIPLALTIKGLNPTAIFLTTL. Topologically, residues 1339–1346 are cytoplasmic; it reads SRTSKKRS. Residues 1347–1367 form a helical membrane-spanning segment; that stretch reads WPLNEAIMAVGMVSILASSLL. The Lumenal segment spans residues 1368–1370; it reads KND. The helical transmembrane segment at 1371–1391 threads the bilayer; that stretch reads IPMTGPLVAGGLLTVCYVLTG. Topologically, residues 1392 to 1447 are cytoplasmic; sequence RSADLELERAADVKWEDQAEISGSSPILSITISEDGSMSIKNEEEEQTLTILIRRG. Residues 1398 to 1437 are interacts with and activates NS3 protease; it reads LERAADVKWEDQAEISGSSPILSITISEDGSMSIKNEEEE. An intramembrane region (helical) is located at residues 1448–1468; that stretch reads LLVISGLFPVSIPITAAAWYL. At 1469 to 2147 the chain is on the cytoplasmic side; sequence WEVKKQRAGV…LSELPETLET (679 aa). Positions 1476 to 1653 constitute a Peptidase S7 domain; sequence AGVLWDVPSP…EKSIEDNPEI (178 aa). Residues histidine 1526, aspartate 1550, and serine 1610 each act as charge relay system; for serine protease NS3 activity in the active site. Residues 1655 to 1811 form the Helicase ATP-binding domain; the sequence is DDIFRKRRLT…QSNAPIIDEE (157 aa). Positions 1659 to 1662 are important for RNA-binding; sequence RKRR. 1668–1675 is an ATP binding site; the sequence is LHPGAGKT. The short motif at 1759–1762 is the DEAH box element; sequence DEAH. Residues 1821–1988 form the Helicase C-terminal domain; the sequence is SGHEWVTDFK…IIPSMFEPER (168 aa). Lysine 1863 bears the N6-acetyllysine; by host mark. A helical transmembrane segment spans residues 2148-2168; sequence LLLLTLLATVTGGIFLFLMSA. The Lumenal segment spans residues 2169-2170; the sequence is RG. The helical intramembrane region spans 2171–2191; sequence IGKMTLGMCCIITASILLWYA. Glutamine 2192 is a topological domain (lumenal). Residues 2193–2213 form a helical membrane-spanning segment; the sequence is IQPHWIAASIILEFFLIVLLI. At 2214-2228 the chain is on the cytoplasmic side; the sequence is PEPEKQRTPQDNQLT. Residues 2229–2249 form a helical membrane-spanning segment; sequence YVVIAILTVVAATMANEMGFL. Residues 2250 to 2274 are Lumenal-facing; the sequence is EKTKKDLGLGSIATQQPESNILDID. Residues 2275 to 2295 constitute an intramembrane region (helical); that stretch reads LRPASAWTLYAVATTFVTPML. Over 2296 to 2316 the chain is Lumenal; that stretch reads RHSIENSSVNVSLTAIANQAT. Residues asparagine 2301 and asparagine 2305 are each glycosylated (N-linked (GlcNAc...) asparagine; by host). Residues 2317 to 2337 constitute an intramembrane region (helical); the sequence is VLMGLGKGWPLSKMDIGVPLL. Over 2338-2347 the chain is Lumenal; the sequence is AIGCYSQVNP. Residues 2348–2368 form a helical membrane-spanning segment; the sequence is TTLTAALFLLVAHYAIIGPAL. The Cytoplasmic portion of the chain corresponds to 2369-2413; it reads QAKASREAQKRAAAGIMKNPTVDGITVIDLDPIPYDPKFEKQLGQ. The helical transmembrane segment at 2414–2434 threads the bilayer; it reads VMLLVLCVTQVLMMRTTWALC. Residues 2435-2459 are Lumenal-facing; that stretch reads EALTLATGPISTLSEGNPGRFWNTT. Asparagine 2457 carries N-linked (GlcNAc...) asparagine; by host glycosylation. Residues 2460–2480 traverse the membrane as a helical segment; sequence IAVSMANIFRGSYLAGAGLLF. Topologically, residues 2481-3391 are cytoplasmic; the sequence is SIMKNTTNTR…REEEEAGVLW (911 aa). The mRNA cap 0-1 NS5-type MT domain maps to 2493–2755; it reads TGNIGETLGE…DVDLGSGTRN (263 aa). Serine 2547 provides a ligand contact to S-adenosyl-L-methionine. Serine 2547 is modified (phosphoserine). The active-site For 2'-O-MTase activity is lysine 2552. Residues 2568 to 2571 carry the SUMO-interacting motif motif; sequence VVDL. Residues glycine 2577, tryptophan 2578, threonine 2595, lysine 2596, aspartate 2622, and valine 2623 each contribute to the S-adenosyl-L-methionine site. Catalysis depends on aspartate 2637, which acts as the For 2'-O-MTase activity. An S-adenosyl-L-methionine-binding site is contributed by isoleucine 2638. Residues lysine 2672 and glutamate 2708 each act as for 2'-O-MTase activity in the active site. Tyrosine 2710 is a binding site for S-adenosyl-L-methionine. Positions 2929, 2933, 2938, and 2941 each coordinate Zn(2+). The RdRp catalytic domain maps to 3020–3169; that stretch reads AMYADDTAGW…PLDDRLPSAL (150 aa). Positions 3203, 3219, and 3338 each coordinate Zn(2+).

This sequence in the N-terminal section; belongs to the class I-like SAM-binding methyltransferase superfamily. mRNA cap 0-1 NS5-type methyltransferase family. In terms of assembly, homodimer. Interacts (via N-terminus) with host EXOC1 (via C-terminus); this interaction results in EXOC1 degradation through the proteasome degradation pathway. As to quaternary structure, forms heterodimers with envelope protein E in the endoplasmic reticulum and Golgi. Homodimer; in the endoplasmic reticulum and Golgi. Interacts with protein prM. Interacts with non-structural protein 1. In terms of assembly, homodimer; Homohexamer when secreted. Interacts with envelope protein E. Interacts with host PRKAA1. As to quaternary structure, interacts (via N-terminus) with serine protease NS3. Forms a heterodimer with serine protease NS3. May form homooligomers. In terms of assembly, forms a heterodimer with NS2B. Interacts with NS4B. Interacts with unphosphorylated RNA-directed RNA polymerase NS5; this interaction stimulates RNA-directed RNA polymerase NS5 guanylyltransferase activity. Interacts with host SHFL. As to quaternary structure, interacts with host MAVS; this interaction inhibits the synthesis of IFN-beta. Interacts with host SHFL. Interacts with host AUP1; the interaction occurs in the presence of Dengue virus NS4B and induces lipophagy which facilitates production of virus progeny particles. May interact with host SRPRA and SEC61G. Interacts with serine protease NS3. In terms of assembly, homodimer. Interacts with host STAT2; this interaction inhibits the phosphorylation of the latter, and, when all viral proteins are present (polyprotein), targets STAT2 for degradation. Interacts with serine protease NS3. Interacts with host PAF1 complex; the interaction may prevent the recruitment of the PAF1 complex to interferon-responsive genes, and thus reduces the immune response. Post-translationally, specific enzymatic cleavages in vivo yield mature proteins. Cleavages in the lumen of endoplasmic reticulum are performed by host signal peptidase, whereas cleavages in the cytoplasmic side are performed by serine protease NS3. Signal cleavage at the 2K-4B site requires a prior NS3 protease-mediated cleavage at the 4A-2K site. In terms of processing, cleaved in post-Golgi vesicles by a host furin, releasing the mature small envelope protein M, and peptide pr. This cleavage is incomplete as up to 30% of viral particles still carry uncleaved prM. N-glycosylated. Post-translationally, N-glycosylated. The excreted form is glycosylated and this is required for efficient secretion of the protein from infected cells. In terms of processing, acetylated by host KAT5. Acetylation modulates NS3 RNA-binding and unwinding activities and plays an important positive role for viral replication. Sumoylation of RNA-directed RNA polymerase NS5 increases NS5 protein stability allowing proper viral RNA replication. Post-translationally, phosphorylated on serines residues. This phosphorylation may trigger NS5 nuclear localization.

It localises to the virion. Its subcellular location is the host nucleus. The protein localises to the host cytoplasm. The protein resides in the host perinuclear region. It is found in the secreted. It localises to the virion membrane. Its subcellular location is the host endoplasmic reticulum membrane. The protein localises to the host mitochondrion. The enzyme catalyses Selective hydrolysis of -Xaa-Xaa-|-Yaa- bonds in which each of the Xaa can be either Arg or Lys and Yaa can be either Ser or Ala.. It catalyses the reaction RNA(n) + a ribonucleoside 5'-triphosphate = RNA(n+1) + diphosphate. The catalysed reaction is a ribonucleoside 5'-triphosphate + H2O = a ribonucleoside 5'-diphosphate + phosphate + H(+). It carries out the reaction ATP + H2O = ADP + phosphate + H(+). The enzyme catalyses a 5'-end (5'-triphosphoguanosine)-ribonucleoside in mRNA + S-adenosyl-L-methionine = a 5'-end (N(7)-methyl 5'-triphosphoguanosine)-ribonucleoside in mRNA + S-adenosyl-L-homocysteine. It catalyses the reaction a 5'-end (N(7)-methyl 5'-triphosphoguanosine)-ribonucleoside in mRNA + S-adenosyl-L-methionine = a 5'-end (N(7)-methyl 5'-triphosphoguanosine)-(2'-O-methyl-ribonucleoside) in mRNA + S-adenosyl-L-homocysteine + H(+). Its function is as follows. Plays a role in virus budding by binding to the cell membrane and gathering the viral RNA into a nucleocapsid that forms the core of a mature virus particle. During virus entry, may induce genome penetration into the host cytoplasm after hemifusion induced by the surface proteins. Can migrate to the cell nucleus where it modulates host functions. Overcomes the anti-viral effects of host EXOC1 by sequestering and degrading the latter through the proteasome degradation pathway. Functionally, inhibits RNA silencing by interfering with host Dicer. In terms of biological role, prevents premature fusion activity of envelope proteins in trans-Golgi by binding to envelope protein E at pH6.0. After virion release in extracellular space, gets dissociated from E dimers. Acts as a chaperone for envelope protein E during intracellular virion assembly by masking and inactivating envelope protein E fusion peptide. prM is the only viral peptide matured by host furin in the trans-Golgi network probably to avoid catastrophic activation of the viral fusion activity in acidic Golgi compartment prior to virion release. prM-E cleavage is inefficient, and many virions are only partially matured. These uncleaved prM would play a role in immune evasion. Its function is as follows. May play a role in virus budding. Exerts cytotoxic effects by activating a mitochondrial apoptotic pathway through M ectodomain. May display a viroporin activity. Functionally, binds to host cell surface receptor and mediates fusion between viral and cellular membranes. Envelope protein is synthesized in the endoplasmic reticulum in the form of heterodimer with protein prM. They play a role in virion budding in the ER, and the newly formed immature particle is covered with 60 spikes composed of heterodimer between precursor prM and envelope protein E. The virion is transported to the Golgi apparatus where the low pH causes dissociation of PrM-E heterodimers and formation of E homodimers. prM-E cleavage is inefficient, and many virions are only partially matured. These uncleaved prM would play a role in immune evasion. In terms of biological role, involved in immune evasion, pathogenesis and viral replication. Once cleaved off the polyprotein, is targeted to three destinations: the viral replication cycle, the plasma membrane and the extracellular compartment. Essential for viral replication. Required for formation of the replication complex and recruitment of other non-structural proteins to the ER-derived membrane structures. Excreted as a hexameric lipoparticle that plays a role against host immune response. Antagonizing the complement function. Binds to the host macrophages and dendritic cells. Inhibits signal transduction originating from Toll-like receptor 3 (TLR3). Mediates complement activation, which may contribute to the pathogenesis of the vascular leakage that occurs in severe dengue disease. Activates autophagy through the AMPK/ERK/mTOR signaling pathway. Mechanistically, acts as the assembly platform for STK11-AMPK interactions and promotes STK11-AMPK interactions. In turn, promotes phosphorylation of the AMPK kinase structural domain and activates AMPK, thereby positively regulating the AMPK/ERK/mTOR signaling pathway and inducing autophagy. Disrupts the host endothelial glycocalyx layer of host pulmonary microvascular endothelial cells, inducing degradation of sialic acid and shedding of heparan sulfate proteoglycans. NS1 induces expression of sialidases, heparanase, and activates cathepsin L, which activates heparanase via enzymatic cleavage. These effects are probably linked to the endothelial hyperpermeability observed in severe dengue disease. Its function is as follows. Component of the viral RNA replication complex that functions in virion assembly and antagonizes the host immune response. Functionally, required cofactor for the serine protease function of NS3. May have membrane-destabilizing activity and form viroporins. In terms of biological role, displays three enzymatic activities: serine protease, NTPase and RNA helicase. NS3 serine protease, in association with NS2B, performs its autocleavage and cleaves the polyprotein at dibasic sites in the cytoplasm: C-prM, NS2A-NS2B, NS2B-NS3, NS3-NS4A, NS4A-2K and NS4B-NS5. NS3 RNA helicase binds RNA and unwinds dsRNA in the 3' to 5' direction. Regulates the ATPase activity of the NS3 helicase activity. NS4A allows NS3 helicase to conserve energy during unwinding. Plays a role in the inhibition of the host innate immune response. Interacts with host MAVS and thereby prevents the interaction between RIGI and MAVS. In turn, IFN-beta production is impaired. Interacts with host AUP1 which mediates induction of lipophagy in host cells and facilitates production of virus progeny particles. Its function is as follows. Functions as a signal peptide for NS4B and is required for the interferon antagonism activity of the latter. Functionally, induces the formation of ER-derived membrane vesicles where the viral replication takes place. Inhibits interferon (IFN)-induced host STAT1 phosphorylation and nuclear translocation, thereby preventing the establishment of cellular antiviral state by blocking the IFN-alpha/beta pathway. In terms of biological role, replicates the viral (+) and (-) RNA genome, and performs the capping of genomes in the cytoplasm. NS5 methylates viral RNA cap at guanine N-7 and ribose 2'-O positions. Besides its role in RNA genome replication, also prevents the establishment of cellular antiviral state by blocking the interferon-alpha/beta (IFN-alpha/beta) signaling pathway. Inhibits host TYK2 and STAT2 phosphorylation, thereby preventing activation of JAK-STAT signaling pathway. May reduce immune responses by preventing the recruitment of the host PAF1 complex to interferon-responsive genes. In Dengue virus type 2 (strain 16681-PDK53) (DENV-2), this protein is Genome polyprotein.